Reading from the N-terminus, the 760-residue chain is Armadillo-like helical domain-containing protein 4 (760 aa).

An N-terminal signal peptide occupies residues 1-27 (MSRPIVLHICLAFCSLLLLNFAAQCLA). Over 28–700 (FPNLERREIV…KDKAGYMSGM (673 aa)) the chain is Extracellular. 6 disordered regions span residues 49–69 (LNTDDLENDSVTSNTPVSGDP), 117–143 (GEEVFGSSQPERMSPESRPSKATLTNP), 216–243 (RTEKFEANPEHKTTSFPGSKLTAGTEPS), 373–392 (HGGERASDQSSVTPTSPMGD), 474–495 (TRGEDETKGGRELPSATVDAPR), and 536–652 (NEEL…SQEP). Asn-56 carries an N-linked (GlcNAc...) asparagine glycan. Basic and acidic residues predominate over residues 216–228 (RTEKFEANPEHKT). Over residues 380–390 (DQSSVTPTSPM) the composition is skewed to polar residues. Residues 474–484 (TRGEDETKGGR) are compositionally biased toward basic and acidic residues. Over residues 594 to 635 (LESEEGEDDEDEEDEEEEDEEEEDEEEDEEDKDADSLDEALG) the composition is skewed to acidic residues. The helical transmembrane segment at 701-721 (LVPVGVGIAGALFILGALYSI) threads the bilayer. Residues 722-760 (KVMNRRRRNGFKRHKRKQREFNSMQDRVMLLADSSEDEF) lie on the Cytoplasmic side of the membrane. Phosphoserine is present on residues Ser-755 and Ser-756.

As to quaternary structure, interacts with IL6ST; this interaction prevents IL6ST protein homodimerization and bridges ARMH4 with IL6R and STAT3 and therefore inhibits phosphorylation of STAT3 at 'Tyr-705'. Interacts (via cytoplasmic tail) with RICTOR; this interaction bridges ARMH4 to the mTORC2 complex and inhibits the mTORC2 kinase activity.

The protein resides in the membrane. Its function is as follows. May modulate immune response and may play a role in inflammation. Down-modulates STAT3 signaling throught direct interaction with IL6ST, resulting in the inhibition of phosphorylation of STAT3 at Tyr-705. May negatively regulates AKT signaling by modulating the activity of mTORC2 complex through RICTOR interaction. This Bos taurus (Bovine) protein is Armadillo-like helical domain-containing protein 4.